Reading from the N-terminus, the 85-residue chain is UPF0298 protein SUB0431 (85 aa).

The protein belongs to the UPF0298 family.

The protein localises to the cytoplasm. The protein is UPF0298 protein SUB0431 of Streptococcus uberis (strain ATCC BAA-854 / 0140J).